The following is a 251-amino-acid chain: Spermatogenesis-associated protein 46 (251 aa).

Its subcellular location is the nucleus membrane. Functionally, plays a role in spermiogenesis and fertilization. This Macaca fascicularis (Crab-eating macaque) protein is Spermatogenesis-associated protein 46 (SPATA46).